We begin with the raw amino-acid sequence, 262 residues long: T-cell surface glycoprotein YE1/48 (262 aa).

Residues 1–44 (MSEQEVTYSMVRFHKSAGLQKQVRPEETKGPREAGYRRCSFHWK) are Cytoplasmic-facing. Residues 45–66 (FIVIALGIFCFLLLVAVSVLAI) form a helical; Signal-anchor for type II membrane protein membrane-spanning segment. The Extracellular segment spans residues 67–262 (KIFQYDQQKN…CGKRLDKFPH (196 aa)). N-linked (GlcNAc...) asparagine glycans are attached at residues asparagine 86, asparagine 103, and asparagine 123. The Cell attachment site motif lies at 137-139 (RGD). The region spanning 138–257 (GDKVYWFCYG…VFICICGKRL (120 aa)) is the C-type lectin domain. Disulfide bonds link cysteine 145–cysteine 150, cysteine 163–cysteine 251, cysteine 167–cysteine 253, and cysteine 232–cysteine 245.

In terms of assembly, homodimer; disulfide-linked. As to expression, high, in T-lymphoma lines, very low in normal lymphocytes.

Its subcellular location is the membrane. Receptor on natural killer (NK) cells for H-2d alleles. Inhibits the activity of NK cells thus preventing cell lysis. This chain is T-cell surface glycoprotein YE1/48 (Klra1), found in Mus musculus (Mouse).